Here is a 94-residue protein sequence, read N- to C-terminus: Alpha-conotoxin-like Vt20.1 (94 aa).

An N-terminal signal peptide occupies residues 1-25 (MPKLAVVLLVLLILPLSYFDAGGQA). Positions 26–44 (VQGDWRGNRLARDLQRGGR) are excised as a propeptide. 4-carboxyglutamate is present on residues glutamate 47 and glutamate 49. Intrachain disulfides connect cysteine 63–cysteine 72, cysteine 68–cysteine 80, cysteine 73–cysteine 90, and cysteine 78–cysteine 92.

This sequence belongs to the conotoxin D superfamily. As to quaternary structure, hetero-, homo- or pseudo-homodimer (identical sequence, different post-translational modifications). As to expression, expressed by the venom duct.

Its subcellular location is the secreted. Alpha-conotoxins act on postsynaptic membranes, they bind to the nicotinic acetylcholine receptors (nAChR) and thus inhibit them. Through its two C-terminal domains, this homodimeric protein would bind to two nAChR allosteric sites, located outside the nAChR C-loop of the principal binding face and at the adjacent binding interface in a clockwise direction. This toxin specifically blocks mammalian neuronal nAChR of the alpha-7/CHRNA7, alpha-3-beta-2/CHRNA3-CHRNB2 and alpha-4-beta-2/CHRNA4-CHRNB2 subtypes. This is Alpha-conotoxin-like Vt20.1 from Conus planorbis (Planorbis cone).